The following is a 251-amino-acid chain: MSANELPSSAQAFQEQFLGGFVSRKLLLHNPFDHNTQRAFAVAPSPLITHENNLSGNVMMLLSILICGIICCLGLHYIIRCALRRSTRFMISEPVPSLSSTRGSSNKGIKKKALRMFPVVSYSPEMNLPGLDEECVICLSDFVSGEQLRLLPKCNHGFHVRCIDKWLQQHLTCPKCRNCLVETCQKILGDFSQADSVTAEPTEIVIVTIVPLEPTEIVIVTIAPLEPTEIVIVMIAPLEPEGRVNTIREIS.

A helical membrane pass occupies residues 59–79; that stretch reads MMLLSILICGIICCLGLHYII. Residues 135 to 177 form an RING-type; atypical zinc finger; it reads CVICLSDFVSGEQLRLLPKCNHGFHVRCIDKWLQQHLTCPKCR.

The protein belongs to the RING-type zinc finger family. ATL subfamily.

It localises to the membrane. It carries out the reaction S-ubiquitinyl-[E2 ubiquitin-conjugating enzyme]-L-cysteine + [acceptor protein]-L-lysine = [E2 ubiquitin-conjugating enzyme]-L-cysteine + N(6)-ubiquitinyl-[acceptor protein]-L-lysine.. It functions in the pathway protein modification; protein ubiquitination. This Arabidopsis thaliana (Mouse-ear cress) protein is RING-H2 finger protein ATL10 (ATL10).